Here is a 439-residue protein sequence, read N- to C-terminus: GTPase Obg (439 aa).

The Obg domain maps to Met1 to Leu159. In terms of domain architecture, OBG-type G spans Ala160–Ala336. GTP contacts are provided by residues Gly166–Ser173, Phe191–Ser195, Asp213–Gly216, Thr283–Asp286, and Ser317–Leu319. Residues Ser173 and Thr193 each coordinate Mg(2+). In terms of domain architecture, OCT spans Asp358–Asp439.

It belongs to the TRAFAC class OBG-HflX-like GTPase superfamily. OBG GTPase family. Monomer. Mg(2+) serves as cofactor.

The protein localises to the cytoplasm. Its function is as follows. An essential GTPase which binds GTP, GDP and possibly (p)ppGpp with moderate affinity, with high nucleotide exchange rates and a fairly low GTP hydrolysis rate. Plays a role in control of the cell cycle, stress response, ribosome biogenesis and in those bacteria that undergo differentiation, in morphogenesis control. The sequence is that of GTPase Obg from Leuconostoc citreum (strain KM20).